A 573-amino-acid polypeptide reads, in one-letter code: Potassium-transporting ATPase potassium-binding subunit (573 aa).

The next 10 membrane-spanning stretches (helical) occupy residues 6–26, 66–86, 135–155, 177–197, 257–277, 283–303, 382–402, 428–448, 493–513, and 537–557; these read ILFALFIVTIALITKPLGSYI, FFSLVSFSVMAFIFVLVILLL, ALAVQNFVSAAVGLCVAIALI, VFWILLPISIVIAIVYIFQGV, IQMVSIFAIAAALTYTFGKWV, GWLIFGVMLVLFIISLVVMTI, IFGGVGAGFYGFFMFLMLAVF, MFALLIFPCCVLVFTGLAAVI, ITIALSMLIGRFGVIFAVIML, and FIFAILVFFTILLIGGLTIFP.

Belongs to the KdpA family. As to quaternary structure, the system is composed of three essential subunits: KdpA, KdpB and KdpC.

Its subcellular location is the cell inner membrane. Its function is as follows. Part of the high-affinity ATP-driven potassium transport (or Kdp) system, which catalyzes the hydrolysis of ATP coupled with the electrogenic transport of potassium into the cytoplasm. This subunit binds the periplasmic potassium ions and delivers the ions to the membrane domain of KdpB through an intramembrane tunnel. This chain is Potassium-transporting ATPase potassium-binding subunit, found in Francisella tularensis subsp. holarctica (strain FTNF002-00 / FTA).